Reading from the N-terminus, the 493-residue chain is Dipeptide permease D (493 aa).

Helical transmembrane passes span 14 to 34 (VVAL…LLIL), 49 to 69 (ELFS…GYLA), 91 to 111 (LVLG…AIIV), 138 to 158 (GGFS…PIAC), 167 to 187 (WAMG…IFLC), 212 to 232 (NWGW…VLFW), 235 to 255 (WSVY…AKIY), 267 to 287 (LGLI…AQQG), 312 to 332 (MFQS…AWLV), 344 to 364 (IWGK…ILTL), 379 to 399 (LMVL…PVAM), 413 to 433 (VLTG…AGVI), and 458 to 478 (VFEQ…LIWL).

Belongs to the major facilitator superfamily. Proton-dependent oligopeptide transporter (POT/PTR) (TC 2.A.17) family. DtpD subfamily.

It is found in the cell inner membrane. Probable proton-dependent permease that transports dipeptides. In Salmonella paratyphi C (strain RKS4594), this protein is Dipeptide permease D.